Here is a 566-residue protein sequence, read N- to C-terminus: Mucin-21 (566 aa).

The N-terminal stretch at 1–24 is a signal peptide; sequence MKMQKGNVLLMFGLLLHLEAATNS. N-linked (GlcNAc...) asparagine glycosylation is present at asparagine 25. Positions 25–68 are disordered; it reads NETSTSANTGSSVISSGASTATNSGSSVTSSGVSTATISGSSVT. Residues 25 to 479 are Extracellular-facing; it reads NETSTSANTG…KPGGSLVPWE (455 aa). Repeat copies occupy residues 31–44, 45–59, 60–74, 75–89, 90–104, 105–119, 120–134, 135–149, 150–164, 165–179, 180–194, 195–209, 210–224, 225–239, 244–254, 255–269, 270–284, 285–299, 300–314, 315–329, 330–344, 345–359, 360–374, 375–389, 390–404, 405–419, 420–434, and 435–449. Positions 31 to 435 are 28 X 15 AA approximate tandem repeats; sequence ANTGSSVISS…STTSSGANTA (405 aa). The interval 106–456 is disordered; it reads TNSESSTTSS…SGTAALTGMH (351 aa). A helical transmembrane segment spans residues 480 to 500; it reads IFLITLVSVVAAVGLFAGLFF. Residues 501–566 lie on the Cytoplasmic side of the membrane; it reads CVRNSLSLRN…MEMSGRNSGP (66 aa). The tract at residues 521-566 is cytoplasmic tail; sequence GLNHGLGPGPGGNHGAPHRPRWSPNWFWRRPVSSIAMEMSGRNSGP.

In terms of processing, O-glycosylated. Expressed in lung, large intestine, thymus, and testis. Expressed in normal and malignant bronchial epithelial cells.

The protein resides in the cell membrane. This is Mucin-21 (MUC21) from Homo sapiens (Human).